The primary structure comprises 485 residues: NADH-quinone oxidoreductase subunit N (485 aa).

Transmembrane regions (helical) follow at residues 8-28 (LIAL…MLSI), 35-55 (FLNA…LWFV), 71-91 (GFAM…CTFA), 105-125 (FYLL…ANHL), 127-147 (SLFL…GYAF), 159-179 (YTIL…LVYA), 203-223 (LLAG…LVPF), 235-255 (PAPV…GVVM), 271-291 (VVLA…ALSQ), 297-317 (LLGY…IALQ), 326-346 (VGVY…VVSL), 373-393 (AAVM…LGFI), 408-430 (WWLV…RVAV), and 455-475 (IVVL…QPLI).

It belongs to the complex I subunit 2 family. NDH-1 is composed of 13 different subunits. Subunits NuoA, H, J, K, L, M, N constitute the membrane sector of the complex.

The protein resides in the cell inner membrane. It catalyses the reaction a quinone + NADH + 5 H(+)(in) = a quinol + NAD(+) + 4 H(+)(out). NDH-1 shuttles electrons from NADH, via FMN and iron-sulfur (Fe-S) centers, to quinones in the respiratory chain. The immediate electron acceptor for the enzyme in this species is believed to be ubiquinone. Couples the redox reaction to proton translocation (for every two electrons transferred, four hydrogen ions are translocated across the cytoplasmic membrane), and thus conserves the redox energy in a proton gradient. This chain is NADH-quinone oxidoreductase subunit N, found in Escherichia coli O81 (strain ED1a).